The chain runs to 308 residues: tRNA dimethylallyltransferase (308 aa).

8-15 provides a ligand contact to ATP; that stretch reads GATAVGKT. 10-15 contacts substrate; sequence TAVGKT. The interval 33–36 is interaction with substrate tRNA; sequence DSRQ.

The protein belongs to the IPP transferase family. As to quaternary structure, monomer. It depends on Mg(2+) as a cofactor.

It catalyses the reaction adenosine(37) in tRNA + dimethylallyl diphosphate = N(6)-dimethylallyladenosine(37) in tRNA + diphosphate. Functionally, catalyzes the transfer of a dimethylallyl group onto the adenine at position 37 in tRNAs that read codons beginning with uridine, leading to the formation of N6-(dimethylallyl)adenosine (i(6)A). The protein is tRNA dimethylallyltransferase of Kosmotoga olearia (strain ATCC BAA-1733 / DSM 21960 / TBF 19.5.1).